A 309-amino-acid chain; its full sequence is Ornithine carbamoyltransferase (309 aa).

Carbamoyl phosphate contacts are provided by residues Ser-52–Thr-55, Gln-79, Arg-103, and His-130–Gln-133. Residues Asn-161, Asp-221, and Ser-225–Met-226 each bind L-ornithine. Residues Cys-261–Leu-262 and Arg-289 contribute to the carbamoyl phosphate site.

This sequence belongs to the aspartate/ornithine carbamoyltransferase superfamily. OTCase family.

The protein resides in the cytoplasm. The enzyme catalyses carbamoyl phosphate + L-ornithine = L-citrulline + phosphate + H(+). It functions in the pathway amino-acid biosynthesis; L-arginine biosynthesis; L-arginine from L-ornithine and carbamoyl phosphate: step 1/3. Its function is as follows. Reversibly catalyzes the transfer of the carbamoyl group from carbamoyl phosphate (CP) to the N(epsilon) atom of ornithine (ORN) to produce L-citrulline. The chain is Ornithine carbamoyltransferase from Methanoculleus marisnigri (strain ATCC 35101 / DSM 1498 / JR1).